Reading from the N-terminus, the 845-residue chain is Proto-oncogene vav (845 aa).

Positions 1 to 119 (MELWRQCTHW…YTLSALSWTP (119 aa)) constitute a Calponin-homology (CH) domain. The DH domain maps to 194–373 (KRCCCLREIQ…RDLAQCVNEV (180 aa)). A PH domain is found at 402 to 504 (RPKIDGELKI…WMEQFEMAIS (103 aa)). A Phorbol-ester/DAG-type zinc finger spans residues 515 to 564 (GHDFQMFSFEETTSCKACQMLLRGTFYQGYRCHRCRASAHKECLGRVPPC). The region spanning 592 to 660 (LGLPKMEVFQ…PCNRVKPYVH (69 aa)) is the SH3 1 domain. The SH2 domain occupies 671-765 (WYAGPMERAG…SLDTTLQFPF (95 aa)). In terms of domain architecture, SH3 2 spans 782–842 (KYFGTAKARY…PANYVEEDYS (61 aa)). A phosphotyrosine mark is found at Y826 and Y844.

As to quaternary structure, interacts with SHB. Interacts with SH2B2, GRB2, GRB3, DOCK2, SLA, TEC and ZNF655/VIK. Interacts with SIAH2; without leading to its degradation. Associates with BLNK, PLCG1, GRB2 and NCK1 in a B-cell antigen receptor-dependent fashion. Interacts with CBLB; which inhibits tyrosine phosphorylation and down-regulates activity. May interact with CCPG1. Interacts with CLNK. Interacts with THEMIS2. Interacts with NEK3 and this interaction is prolactin-dependent. Interacts with ITK. Interacts with PTK2B/PYK2. Interacts with HCK. Interacts with PTK2B/PYK2. Interacts (via SH2 domain) with SYK. Interacts with ANKRD54. Interacts with CD6. Interacts with isoform 2 of CRACR2A. Interacts with LCP2; this interaction plays a role in TCR-mediated cytokine production. In terms of processing, phosphorylated on tyrosine residues by HCK in response to IFNG and bacterial lipopolysaccharide (LPS). Phosphorylated by FYN. As to expression, widely expressed in hematopoietic cells but not in other cell types.

In terms of biological role, couples tyrosine kinase signals with the activation of the Rho/Rac GTPases, thus leading to cell differentiation and/or proliferation. In Homo sapiens (Human), this protein is Proto-oncogene vav (VAV1).